The primary structure comprises 219 residues: Large ribosomal subunit protein uL3 (219 aa).

The tract at residues 113 to 142 (TTKGHGYQGNIHKDNQSRGPMAHGSRYHRR) is disordered.

It belongs to the universal ribosomal protein uL3 family. As to quaternary structure, part of the 50S ribosomal subunit. Forms a cluster with proteins L14 and L19.

One of the primary rRNA binding proteins, it binds directly near the 3'-end of the 23S rRNA, where it nucleates assembly of the 50S subunit. In Limosilactobacillus reuteri (strain DSM 20016) (Lactobacillus reuteri), this protein is Large ribosomal subunit protein uL3.